Here is a 651-residue protein sequence, read N- to C-terminus: tRNA uridine 5-carboxymethylaminomethyl modification enzyme MnmG (651 aa).

11 to 16 (GAGHAG) is a binding site for FAD. 296–310 (GPRYCPSIEDKIVRF) is a binding site for NAD(+).

It belongs to the MnmG family. In terms of assembly, homodimer. Heterotetramer of two MnmE and two MnmG subunits. Requires FAD as cofactor.

The protein resides in the cytoplasm. In terms of biological role, NAD-binding protein involved in the addition of a carboxymethylaminomethyl (cmnm) group at the wobble position (U34) of certain tRNAs, forming tRNA-cmnm(5)s(2)U34. This Chloroflexus aurantiacus (strain ATCC 29366 / DSM 635 / J-10-fl) protein is tRNA uridine 5-carboxymethylaminomethyl modification enzyme MnmG.